A 154-amino-acid chain; its full sequence is Myoglobin (154 aa).

Positions 2–148 constitute a Globin domain; sequence GLSDGEWQLV…FRNDIAAKYK (147 aa). Position 4 is a phosphoserine (serine 4). Residue histidine 65 coordinates nitrite. O2 is bound at residue histidine 65. Threonine 68 carries the post-translational modification Phosphothreonine. Histidine 94 contacts heme b.

The protein belongs to the globin family. As to quaternary structure, monomeric.

It localises to the cytoplasm. The protein resides in the sarcoplasm. It catalyses the reaction Fe(III)-heme b-[protein] + nitric oxide + H2O = Fe(II)-heme b-[protein] + nitrite + 2 H(+). The catalysed reaction is H2O2 + AH2 = A + 2 H2O. Functionally, monomeric heme protein which primary function is to store oxygen and facilitate its diffusion within muscle tissues. Reversibly binds oxygen through a pentacoordinated heme iron and enables its timely and efficient release as needed during periods of heightened demand. Depending on the oxidative conditions of tissues and cells, and in addition to its ability to bind oxygen, it also has a nitrite reductase activity whereby it regulates the production of bioactive nitric oxide. Under stress conditions, like hypoxia and anoxia, it also protects cells against reactive oxygen species thanks to its pseudoperoxidase activity. This is Myoglobin (MB) from Lagostomus maximus (Plains viscacha).